Reading from the N-terminus, the 432-residue chain is Adenylosuccinate synthetase (432 aa).

GTP contacts are provided by residues 13–19 (GDEGKGK) and 41–43 (GHT). Asp14 (proton acceptor) is an active-site residue. Residues Asp14 and Gly41 each contribute to the Mg(2+) site. Residues 14-17 (DEGK), 39-42 (NAGH), Thr130, Arg144, Gln225, Thr240, and Arg304 each bind IMP. Residue His42 is the Proton donor of the active site. 300–306 (ATTGRRR) contacts substrate. GTP is bound by residues Arg306, 332-334 (KLD), and 415-417 (STG).

Belongs to the adenylosuccinate synthetase family. In terms of assembly, homodimer. The cofactor is Mg(2+).

The protein localises to the cytoplasm. It carries out the reaction IMP + L-aspartate + GTP = N(6)-(1,2-dicarboxyethyl)-AMP + GDP + phosphate + 2 H(+). Its pathway is purine metabolism; AMP biosynthesis via de novo pathway; AMP from IMP: step 1/2. In terms of biological role, plays an important role in the de novo pathway of purine nucleotide biosynthesis. Catalyzes the first committed step in the biosynthesis of AMP from IMP. This chain is Adenylosuccinate synthetase, found in Pectobacterium carotovorum subsp. carotovorum (strain PC1).